The chain runs to 491 residues: Probable diguanylate cyclase CdgI (491 aa).

At 1–54 the chain is on the cytoplasmic side; the sequence is MIQSTRISMGLFFKYFLSLTKIDPGQNYISLPSIKSSTHIALLFMVSMGTQKLK. Residues 55-75 traverse the membrane as a helical segment; it reads AQSFFIFSLLLTLILFCITTL. The Periplasmic portion of the chain corresponds to 76–89; the sequence is YNENTNVKLIPQMN. Residues 90 to 110 traverse the membrane as a helical segment; that stretch reads YLMVVVALFFLNAVIFLFMLM. At 111-121 the chain is on the cytoplasmic side; that stretch reads KYFTNKQILPT. Residues 122-142 form a helical membrane-spanning segment; the sequence is LILSLAFLSGLIYLVETIVII. Residues 143-158 lie on the Periplasmic side of the membrane; sequence HKPINGSTLIQTKSND. The chain crosses the membrane as a helical span at residues 159 to 179; it reads VSIFYIFRQLSFICLTSLALF. Topologically, residues 180–193 are cytoplasmic; the sequence is CYGKDNILDNNKKK. The chain crosses the membrane as a helical span at residues 194–214; sequence TGILLLALIPFLVFPLLAHNL. Residues 215–236 are Periplasmic-facing; that stretch reads SSYNADYSLYVVDYCPDNHTAT. Residues 237–257 form a helical membrane-spanning segment; the sequence is WGINYTKILVCLWAFLLFFII. The Cytoplasmic portion of the chain corresponds to 258–265; sequence MRTRLASE. Residues 266 to 286 traverse the membrane as a helical segment; the sequence is LWPLIALLCLASLCCNLLLLT. The Periplasmic portion of the chain corresponds to 287-293; the sequence is LDEYNYT. The chain crosses the membrane as a helical span at residues 294 to 314; that stretch reads IWYISRGIEVSSKLFVVSFLI. Residues 315 to 491 are Cytoplasmic-facing; that stretch reads YNIFQELQLS…GGNKVIIHHI (177 aa). The region spanning 356-491 is the GGDEF domain; the sequence is KDFCVMLVDI…GGNKVIIHHI (136 aa). Residues D364 and I365 each contribute to the Mg(2+) site. Substrate contacts are provided by N372, H377, and D381. Mg(2+) is bound at residue E407. E407 (proton acceptor) is an active-site residue. R427 provides a ligand contact to substrate.

In terms of assembly, homodimer. The cofactor is Mg(2+).

It is found in the cell inner membrane. It catalyses the reaction 2 GTP = 3',3'-c-di-GMP + 2 diphosphate. Its pathway is purine metabolism; 3',5'-cyclic di-GMP biosynthesis. Catalyzes the synthesis of cyclic-di-GMP (c-di-GMP) via the condensation of 2 GTP molecules. This Escherichia coli (strain K12) protein is Probable diguanylate cyclase CdgI.